A 149-amino-acid chain; its full sequence is UPAR/Ly6 domain-containing protein bou (149 aa).

The first 31 residues, 1-31 (MWPPKHAHIGWLSSLALVVLLMSLQMVMVSG), serve as a signal peptide directing secretion. The Extracellular portion of the chain corresponds to 32–126 (IECYVCDTSD…YTCDTDGCNA (95 aa)). 5 disulfides stabilise this stretch: cysteine 34-cysteine 74, cysteine 37-cysteine 48, cysteine 65-cysteine 91, cysteine 100-cysteine 115, and cysteine 119-cysteine 124. Asparagine 64 carries N-linked (GlcNAc...) asparagine glycosylation. A lipid anchor (GPI-anchor amidated asparagine) is attached at asparagine 125. A propeptide spans 126–149 (AAGRLELEWGVAAALLTLTWLLRH) (removed in mature form). The helical transmembrane segment at 127–147 (AGRLELEWGVAAALLTLTWLL) threads the bilayer. Residues 148-149 (RH) lie on the Cytoplasmic side of the membrane.

GPI-anchored.

It localises to the cell membrane. Its subcellular location is the cell junction. It is found in the septate junction. The protein localises to the cytoplasm. The protein resides in the cell cortex. It localises to the secreted. Its subcellular location is the apicolateral cell membrane. Functionally, involved in tracheal paracellular barrier functions mediated by epithelial cell septate junctions. Involved in paracellular barrier functions mediated by glial cell septate junctions in the peripheral nervous system, including the chordotonal organs, but not the hemolymph-brain barrier (the insect blood-brain barrier) of the central nervous system. Required for septate junction assembly, possibly by organizing the preassembly and transport of septate junction proteins such as dlg1/disks large 1, Nrx-IV/Neurexin-IV and the claudin protein kune. Involved in chitin fiber organization during tracheal development. Secreted, possibly in association with extracellular vesicles, to act non-autonomously on tissues distant from its site of expression. In Drosophila melanogaster (Fruit fly), this protein is UPAR/Ly6 domain-containing protein bou.